The following is a 430-amino-acid chain: UDP-N-acetylglucosamine 1-carboxyvinyltransferase (430 aa).

22-23 (KN) contacts phosphoenolpyruvate. A UDP-N-acetyl-alpha-D-glucosamine-binding site is contributed by R102. C126 functions as the Proton donor in the catalytic mechanism. C126 bears the 2-(S-cysteinyl)pyruvic acid O-phosphothioketal mark. Residues 131 to 135 (RPVDL), 172 to 175 (KVSV), D317, and I339 contribute to the UDP-N-acetyl-alpha-D-glucosamine site.

The protein belongs to the EPSP synthase family. MurA subfamily.

The protein resides in the cytoplasm. The catalysed reaction is phosphoenolpyruvate + UDP-N-acetyl-alpha-D-glucosamine = UDP-N-acetyl-3-O-(1-carboxyvinyl)-alpha-D-glucosamine + phosphate. The protein operates within cell wall biogenesis; peptidoglycan biosynthesis. In terms of biological role, cell wall formation. Adds enolpyruvyl to UDP-N-acetylglucosamine. The polypeptide is UDP-N-acetylglucosamine 1-carboxyvinyltransferase (Rhizobium leguminosarum bv. trifolii (strain WSM2304)).